The following is a 336-amino-acid chain: UDP-N-acetylenolpyruvoylglucosamine reductase (336 aa).

Residues 1 to 178 (MAHSLQTLHT…TTVHLALPKE (178 aa)) enclose the FAD-binding PCMH-type domain. Residue arginine 154 is part of the active site. Serine 222 serves as the catalytic Proton donor. The active site involves glutamate 318.

This sequence belongs to the MurB family. FAD is required as a cofactor.

It is found in the cytoplasm. The enzyme catalyses UDP-N-acetyl-alpha-D-muramate + NADP(+) = UDP-N-acetyl-3-O-(1-carboxyvinyl)-alpha-D-glucosamine + NADPH + H(+). It participates in cell wall biogenesis; peptidoglycan biosynthesis. Functionally, cell wall formation. This Pseudoalteromonas translucida (strain TAC 125) protein is UDP-N-acetylenolpyruvoylglucosamine reductase.